The following is a 137-amino-acid chain: Large ribosomal subunit protein eL28 (137 aa).

At Ser-2 the chain carries N-acetylserine. Glycyl lysine isopeptide (Lys-Gly) (interchain with G-Cter in SUMO2) cross-links involve residues Lys-58 and Lys-65. Phosphoserine is present on Ser-115.

The protein belongs to the eukaryotic ribosomal protein eL28 family. As to quaternary structure, component of the large ribosomal subunit.

The protein localises to the cytoplasm. Component of the large ribosomal subunit. The ribosome is a large ribonucleoprotein complex responsible for the synthesis of proteins in the cell. This chain is Large ribosomal subunit protein eL28 (Rpl28), found in Rattus norvegicus (Rat).